Here is a 164-residue protein sequence, read N- to C-terminus: Glutamate uptake regulatory protein (164 aa).

Residues 5-66 (LDDFDIKILD…LLDPQKIGLG (62 aa)) enclose the HTH asnC-type domain. The H-T-H motif DNA-binding region spans 24-43 (MAELSEKTGLSANACWRRIR).

Its function is as follows. Represses the secondary, H(+)-coupled glutamate uptake system (Gluemp) genes. The chain is Glutamate uptake regulatory protein (grp) from Zymomonas mobilis subsp. mobilis (strain ATCC 31821 / ZM4 / CP4).